The following is a 929-amino-acid chain: Isoleucine--tRNA ligase (929 aa).

A 'HIGH' region motif is present at residues 58–68 (PYANGDIHIGH). Position 563 (Glu-563) interacts with L-isoleucyl-5'-AMP. The 'KMSKS' region motif lies at 605–609 (KMSKS). Lys-608 is a binding site for ATP. Zn(2+) is bound by residues Cys-892, Cys-895, Cys-912, and Cys-915.

The protein belongs to the class-I aminoacyl-tRNA synthetase family. IleS type 1 subfamily. In terms of assembly, monomer. It depends on Zn(2+) as a cofactor.

The protein resides in the cytoplasm. It carries out the reaction tRNA(Ile) + L-isoleucine + ATP = L-isoleucyl-tRNA(Ile) + AMP + diphosphate. Functionally, catalyzes the attachment of isoleucine to tRNA(Ile). As IleRS can inadvertently accommodate and process structurally similar amino acids such as valine, to avoid such errors it has two additional distinct tRNA(Ile)-dependent editing activities. One activity is designated as 'pretransfer' editing and involves the hydrolysis of activated Val-AMP. The other activity is designated 'posttransfer' editing and involves deacylation of mischarged Val-tRNA(Ile). The sequence is that of Isoleucine--tRNA ligase from Neisseria gonorrhoeae (strain NCCP11945).